We begin with the raw amino-acid sequence, 118 residues long: Large ribosomal subunit protein uL22 (118 aa).

Belongs to the universal ribosomal protein uL22 family. As to quaternary structure, part of the 50S ribosomal subunit.

Its function is as follows. This protein binds specifically to 23S rRNA; its binding is stimulated by other ribosomal proteins, e.g. L4, L17, and L20. It is important during the early stages of 50S assembly. It makes multiple contacts with different domains of the 23S rRNA in the assembled 50S subunit and ribosome. Functionally, the globular domain of the protein is located near the polypeptide exit tunnel on the outside of the subunit, while an extended beta-hairpin is found that lines the wall of the exit tunnel in the center of the 70S ribosome. The polypeptide is Large ribosomal subunit protein uL22 (Pediococcus pentosaceus (strain ATCC 25745 / CCUG 21536 / LMG 10740 / 183-1w)).